A 252-amino-acid chain; its full sequence is Ribosomal RNA small subunit methyltransferase J (252 aa).

Residues Arg-104–Asp-105, Glu-120–Arg-121, and Asp-174 contribute to the S-adenosyl-L-methionine site.

Belongs to the methyltransferase superfamily. RsmJ family.

Its subcellular location is the cytoplasm. The catalysed reaction is guanosine(1516) in 16S rRNA + S-adenosyl-L-methionine = N(2)-methylguanosine(1516) in 16S rRNA + S-adenosyl-L-homocysteine + H(+). Its function is as follows. Specifically methylates the guanosine in position 1516 of 16S rRNA. This chain is Ribosomal RNA small subunit methyltransferase J, found in Mannheimia succiniciproducens (strain KCTC 0769BP / MBEL55E).